The sequence spans 182 residues: Ribosome maturation factor RimM (182 aa).

The 80-residue stretch at 103-182 (EDEFYWRELF…RIEVDWDPGF (80 aa)) folds into the PRC barrel domain.

The protein belongs to the RimM family. Binds ribosomal protein uS19.

Its subcellular location is the cytoplasm. An accessory protein needed during the final step in the assembly of 30S ribosomal subunit, possibly for assembly of the head region. Essential for efficient processing of 16S rRNA. May be needed both before and after RbfA during the maturation of 16S rRNA. It has affinity for free ribosomal 30S subunits but not for 70S ribosomes. The protein is Ribosome maturation factor RimM of Vibrio campbellii (strain ATCC BAA-1116).